The chain runs to 154 residues: Myoglobin (154 aa).

The region spanning 2–148 (GLSDGEWQLV…FRKDIAAKYK (147 aa)) is the Globin domain. The residue at position 4 (serine 4) is a Phosphoserine. Histidine 65 provides a ligand contact to nitrite. Residue histidine 65 coordinates O2. Threonine 68 bears the Phosphothreonine mark. Histidine 94 is a heme b binding site.

Belongs to the globin family. In terms of assembly, monomeric.

The protein resides in the cytoplasm. The protein localises to the sarcoplasm. The catalysed reaction is Fe(III)-heme b-[protein] + nitric oxide + H2O = Fe(II)-heme b-[protein] + nitrite + 2 H(+). The enzyme catalyses H2O2 + AH2 = A + 2 H2O. Monomeric heme protein which primary function is to store oxygen and facilitate its diffusion within muscle tissues. Reversibly binds oxygen through a pentacoordinated heme iron and enables its timely and efficient release as needed during periods of heightened demand. Depending on the oxidative conditions of tissues and cells, and in addition to its ability to bind oxygen, it also has a nitrite reductase activity whereby it regulates the production of bioactive nitric oxide. Under stress conditions, like hypoxia and anoxia, it also protects cells against reactive oxygen species thanks to its pseudoperoxidase activity. The polypeptide is Myoglobin (MB) (Castor fiber (Eurasian beaver)).